The chain runs to 315 residues: Rhomboid-related protein 4 (315 aa).

The Cytoplasmic portion of the chain corresponds to 1–21; the sequence is MQRRSRGINTGLILLLSQIFH. Residues 22–42 form a helical membrane-spanning segment; the sequence is VGINNIPPVTLATLALNIWFF. At 43 to 106 the chain is on the extracellular side; sequence LNPQKPLYSS…RRLGSRWFAY (64 aa). A helical transmembrane segment spans residues 107-127; sequence VITAFSVLTGVVYLLLQFAVA. At 128-138 the chain is on the cytoplasmic side; that stretch reads EFMDEPDFKRS. Residues 139 to 157 traverse the membrane as a helical segment; it reads CAVGFSGVLFALKVLNNHY. The active-site Nucleophile is serine 144. The Extracellular portion of the chain corresponds to 158 to 180; sequence CPGGFVNILGFPVPNRFACWVEL. Residues 181 to 201 traverse the membrane as a helical segment; that stretch reads VAIHLFSPGTSFAGHLAGILV. Residue histidine 195 is part of the active site. Residues 202-315 are Cytoplasmic-facing; sequence GLMYTQGPLK…RQRLHRFDSQ (114 aa). A ubiquitin-binding domain (UBD) region spans residues 269-284; that stretch reads SEEEQLERALQASLWD. Residues 283 to 315 form a disordered region; that stretch reads WDRGNTRNSPPPYGFHLSPEEMRRQRLHRFDSQ. Residues 300–315 show a composition bias toward basic and acidic residues; it reads SPEEMRRQRLHRFDSQ. The tract at residues 301 to 315 is VCP/p97-interacting motif (VIM); sequence PEEMRRQRLHRFDSQ.

This sequence belongs to the peptidase S54 family. Interacts (via C-terminal domain) with VCP. Interacts with ubiquitin and ubiquitinated proteins. Interacts with BIK and STEAP3. As to expression, expressed strongly in testis.

The protein resides in the endoplasmic reticulum membrane. Its subcellular location is the mitochondrion membrane. The catalysed reaction is Cleaves type-1 transmembrane domains using a catalytic dyad composed of serine and histidine that are contributed by different transmembrane domains.. With respect to regulation, inhibited by aprotinin. In terms of biological role, intramembrane-cleaving serine protease that cleaves single transmembrane or multi-pass membrane proteins in the hydrophobic plane of the membrane, luminal loops and juxtamembrane regions. Involved in regulated intramembrane proteolysis and the subsequent release of functional polypeptides from their membrane anchors. Functional component of endoplasmic reticulum-associated degradation (ERAD) for misfolded membrane proteins. Required for the degradation process of some specific misfolded endoplasmic reticulum (ER) luminal proteins. Participates in the transfer of misfolded proteins from the ER to the cytosol, where they are destroyed by the proteasome in a ubiquitin-dependent manner. Functions in BIK, MPZ, PKD1, PTCRA, RHO, STEAP3 and TRAC processing. Involved in the regulation of exosomal secretion; inhibits the TSAP6-mediated secretion pathway. Involved in the regulation of apoptosis; modulates BIK-mediated apoptotic activity. Also plays a role in the regulation of spermatogenesis; inhibits apoptotic activity in spermatogonia. The polypeptide is Rhomboid-related protein 4 (RHBDD1) (Homo sapiens (Human)).